The sequence spans 881 residues: Translation initiation factor IF-2 (881 aa).

Disordered regions lie at residues 53–92 and 163–292; these read RSHG…SKTT and AEAE…FERP. Polar residues predominate over residues 81–92; that stretch reads EVTVNSGRSKTT. A compositionally biased stretch (low complexity) spans 172-186; it reads EAAAAAKAAEALAAA. A compositionally biased stretch (basic and acidic residues) spans 219-236; it reads RNDDRNNRSAPRNERGPG. The segment covering 254–263 has biased composition (low complexity); the sequence is GNSNNSNTRG. The tr-type G domain occupies 380–549; the sequence is QRPPVVTIMG…SIQAELLELK (170 aa). Positions 389 to 396 are G1; that stretch reads GHVDHGKT. 389–396 contributes to the GTP binding site; sequence GHVDHGKT. The interval 414-418 is G2; sequence GITQH. The G3 stretch occupies residues 435–438; the sequence is DTPG. GTP is bound by residues 435–439 and 489–492; these read DTPGH and NKID. Residues 489–492 form a G4 region; sequence NKID. The segment at 525–527 is G5; it reads SAK.

Belongs to the TRAFAC class translation factor GTPase superfamily. Classic translation factor GTPase family. IF-2 subfamily.

It is found in the cytoplasm. In terms of biological role, one of the essential components for the initiation of protein synthesis. Protects formylmethionyl-tRNA from spontaneous hydrolysis and promotes its binding to the 30S ribosomal subunits. Also involved in the hydrolysis of GTP during the formation of the 70S ribosomal complex. This is Translation initiation factor IF-2 from Stenotrophomonas maltophilia (strain K279a).